The sequence spans 377 residues: Dual-specificity RNA methyltransferase RlmN (377 aa).

The active-site Proton acceptor is the E102. The Radical SAM core domain occupies 108–345 (EPDRRTLCVS…AVVRKNRGGD (238 aa)). Cysteines 115 and 350 form a disulfide. The [4Fe-4S] cluster site is built by C122, C126, and C129. S-adenosyl-L-methionine is bound by residues 177–178 (GE), S209, 231–233 (SLN), and N307. C350 serves as the catalytic S-methylcysteine intermediate. Residues 354–377 (AAEGGPGDPRRPAPPPLTRLPAAG) form a disordered region.

It belongs to the radical SAM superfamily. RlmN family. It depends on [4Fe-4S] cluster as a cofactor.

It localises to the cytoplasm. The enzyme catalyses adenosine(2503) in 23S rRNA + 2 reduced [2Fe-2S]-[ferredoxin] + 2 S-adenosyl-L-methionine = 2-methyladenosine(2503) in 23S rRNA + 5'-deoxyadenosine + L-methionine + 2 oxidized [2Fe-2S]-[ferredoxin] + S-adenosyl-L-homocysteine. The catalysed reaction is adenosine(37) in tRNA + 2 reduced [2Fe-2S]-[ferredoxin] + 2 S-adenosyl-L-methionine = 2-methyladenosine(37) in tRNA + 5'-deoxyadenosine + L-methionine + 2 oxidized [2Fe-2S]-[ferredoxin] + S-adenosyl-L-homocysteine. Its function is as follows. Specifically methylates position 2 of adenine 2503 in 23S rRNA and position 2 of adenine 37 in tRNAs. m2A2503 modification seems to play a crucial role in the proofreading step occurring at the peptidyl transferase center and thus would serve to optimize ribosomal fidelity. In Anaeromyxobacter sp. (strain Fw109-5), this protein is Dual-specificity RNA methyltransferase RlmN.